The chain runs to 262 residues: Phosphatidylserine decarboxylase proenzyme (262 aa).

Residues Asp86, His142, and Ser226 each act as charge relay system; for autoendoproteolytic cleavage activity in the active site. The Schiff-base intermediate with substrate; via pyruvic acid; for decarboxylase activity role is filled by Ser226. At Ser226 the chain carries Pyruvic acid (Ser); by autocatalysis.

The protein belongs to the phosphatidylserine decarboxylase family. PSD-B subfamily. Prokaryotic type I sub-subfamily. In terms of assembly, heterodimer of a large membrane-associated beta subunit and a small pyruvoyl-containing alpha subunit. The cofactor is pyruvate. In terms of processing, is synthesized initially as an inactive proenzyme. Formation of the active enzyme involves a self-maturation process in which the active site pyruvoyl group is generated from an internal serine residue via an autocatalytic post-translational modification. Two non-identical subunits are generated from the proenzyme in this reaction, and the pyruvate is formed at the N-terminus of the alpha chain, which is derived from the carboxyl end of the proenzyme. The autoendoproteolytic cleavage occurs by a canonical serine protease mechanism, in which the side chain hydroxyl group of the serine supplies its oxygen atom to form the C-terminus of the beta chain, while the remainder of the serine residue undergoes an oxidative deamination to produce ammonia and the pyruvoyl prosthetic group on the alpha chain. During this reaction, the Ser that is part of the protease active site of the proenzyme becomes the pyruvoyl prosthetic group, which constitutes an essential element of the active site of the mature decarboxylase.

Its subcellular location is the cell membrane. The enzyme catalyses a 1,2-diacyl-sn-glycero-3-phospho-L-serine + H(+) = a 1,2-diacyl-sn-glycero-3-phosphoethanolamine + CO2. It functions in the pathway phospholipid metabolism; phosphatidylethanolamine biosynthesis; phosphatidylethanolamine from CDP-diacylglycerol: step 2/2. Functionally, catalyzes the formation of phosphatidylethanolamine (PtdEtn) from phosphatidylserine (PtdSer). In Bacillus cereus (strain ATCC 10987 / NRS 248), this protein is Phosphatidylserine decarboxylase proenzyme.